The chain runs to 534 residues: Blue-light-activated protein (534 aa).

The 74-residue stretch at 20 to 93 (GKDIFFAAVE…QSIRDAIDQR (74 aa)) folds into the PAS domain. The residue at position 70 (Cys-70) is an S-4a-FMN cysteine. The region spanning 94 to 148 (VDISTEILNYRKDGSSFWNALFISPVYNDAGELIYFFASQLDISRRRDAEEALRQ) is the PAC domain. The Histidine kinase domain maps to 161 to 390 (GIAHDFNNLL…TLRLYFPVDE (230 aa)). His-164 carries the post-translational modification Phosphohistidine; by autocatalysis. The region spanning 411–527 (RILIVEDRPD…DLARKVRQVL (117 aa)) is the Response regulatory domain. Asp-461 is modified (4-aspartylphosphate).

Post-translationally, FMN binds covalently to cysteine after exposure to blue light and this bond is spontaneously broken in the dark.

The catalysed reaction is ATP + protein L-histidine = ADP + protein N-phospho-L-histidine.. Functionally, photosensitive kinase and response regulator that is involved in increased bacterial virulence upon exposure to light. The sequence is that of Blue-light-activated protein from Pseudomonas syringae pv. syringae (strain B728a).